A 223-amino-acid polypeptide reads, in one-letter code: Sugar fermentation stimulation protein homolog (223 aa).

It belongs to the SfsA family.

The chain is Sugar fermentation stimulation protein homolog from Thermosipho melanesiensis (strain DSM 12029 / CIP 104789 / BI429).